Reading from the N-terminus, the 339-residue chain is Glyceraldehyde-3-phosphate dehydrogenase (339 aa).

Residues 12 to 13 (RI), Asp34, Arg78, and Thr120 contribute to the NAD(+) site. Residues 149–151 (SCT), Thr180, 209–210 (TG), and Arg232 each bind D-glyceraldehyde 3-phosphate. Cys150 acts as the Nucleophile in catalysis. Asn319 serves as a coordination point for NAD(+).

This sequence belongs to the glyceraldehyde-3-phosphate dehydrogenase family. As to quaternary structure, homotetramer.

The protein resides in the cytoplasm. It carries out the reaction D-glyceraldehyde 3-phosphate + phosphate + NAD(+) = (2R)-3-phospho-glyceroyl phosphate + NADH + H(+). Its pathway is carbohydrate degradation; glycolysis; pyruvate from D-glyceraldehyde 3-phosphate: step 1/5. Functionally, catalyzes the oxidative phosphorylation of glyceraldehyde 3-phosphate (G3P) to 1,3-bisphosphoglycerate (BPG) using the cofactor NAD. The first reaction step involves the formation of a hemiacetal intermediate between G3P and a cysteine residue, and this hemiacetal intermediate is then oxidized to a thioester, with concomitant reduction of NAD to NADH. The reduced NADH is then exchanged with the second NAD, and the thioester is attacked by a nucleophilic inorganic phosphate to produce BPG. This chain is Glyceraldehyde-3-phosphate dehydrogenase (gapA), found in Haemophilus influenzae (strain ATCC 51907 / DSM 11121 / KW20 / Rd).